The following is a 593-amino-acid chain: Probable ubiquitin carboxyl-terminal hydrolase 4 (593 aa).

A USP domain is found at 227–573 (IGLTNLGNTC…SSYILFYKRS (347 aa)). C236 (nucleophile) is an active-site residue. A phosphoserine mark is found at S338 and S343. H530 serves as the catalytic Proton acceptor.

This sequence belongs to the peptidase C19 family. As to quaternary structure, interacts with sfp47.

It is found in the cytoplasm. The protein resides in the endosome. It catalyses the reaction Thiol-dependent hydrolysis of ester, thioester, amide, peptide and isopeptide bonds formed by the C-terminal Gly of ubiquitin (a 76-residue protein attached to proteins as an intracellular targeting signal).. Functionally, has an ATP-independent isopeptidase activity, cleaving at the C-terminus of the ubiquitin moiety. Acts late in the proteolytic pathway in conjunction with the 26S proteasome. Plays a role in avoiding DNA overreplication. This chain is Probable ubiquitin carboxyl-terminal hydrolase 4 (ubp4), found in Schizosaccharomyces pombe (strain 972 / ATCC 24843) (Fission yeast).